A 608-amino-acid chain; its full sequence is Isoprene synthase, chloroplastic (608 aa).

The N-terminal 45 residues, 1-45, are a transit peptide targeting the chloroplast; it reads MATNLLCLSNKLSSPTPTPSTRFPQSKNFITQKTSLANPKPWRVI. A dimethylallyl diphosphate-binding site is contributed by D350. D350 and D354 together coordinate Mg(2+). The DDXXD motif motif lies at 350-354; that stretch reads DDVYD. 3 residues coordinate dimethylallyl diphosphate: E428, R494, and N497. N497, T501, and E505 together coordinate Mg(2+).

It belongs to the terpene synthase family. Tpsb subfamily. Mg(2+) is required as a cofactor. Requires Mn(2+) as cofactor.

It localises to the plastid. Its subcellular location is the chloroplast. The catalysed reaction is dimethylallyl diphosphate = isoprene + diphosphate. In terms of biological role, lyase that catalyzes the formation of isoprene from dimethylallyl diphosphate. In Pueraria montana var. lobata (Kudzu vine), this protein is Isoprene synthase, chloroplastic (ISPS).